The chain runs to 375 residues: Amylovoran biosynthesis protein AmsC (375 aa).

Transmembrane regions (helical) follow at residues 2 to 22 (AIYWIVSYSILVFCFFELAMI), 31 to 51 (KILINYFFLIGVFALILFAGI), 93 to 113 (MVLAWVASCFTHESYFFLLFI), 162 to 182 (IAFICSLVARNYLLALLFIVL), 208 to 228 (LPLVLVIASIPLGIIGGKKLF), 256 to 276 (VFGLANLKNIAFIGAFTLYYF), 287 to 307 (VYILLIAYSIGAAVRITFSDF), 309 to 329 (IFGGRVGNLFLHTEPLLFAFL), and 337 to 357 (LLNFFMLFSITTYYLAYNTIL).

The protein resides in the cell membrane. It participates in glycan metabolism; exopolysaccharide biosynthesis. In terms of biological role, involved in the biosynthesis of amylovoran which functions as a virulence factor. The polypeptide is Amylovoran biosynthesis protein AmsC (amsC) (Erwinia amylovora (Fire blight bacteria)).